Reading from the N-terminus, the 198-residue chain is Recombination protein RecR (198 aa).

Residues 58-73 form a C4-type zinc finger; it reads CSTCGNFTDTDPCALC. A Toprim domain is found at 81-175; it reads STICVVEQPK…KVTRIAAGIP (95 aa).

Belongs to the RecR family.

In terms of biological role, may play a role in DNA repair. It seems to be involved in an RecBC-independent recombinational process of DNA repair. It may act with RecF and RecO. This is Recombination protein RecR from Clostridium botulinum (strain Alaska E43 / Type E3).